A 319-amino-acid polypeptide reads, in one-letter code: ATP-dependent 6-phosphofructokinase (319 aa).

Residue Gly11 participates in ATP binding. 21-25 (RAVVR) is a binding site for ADP. ATP is bound by residues 72–73 (RC) and 102–105 (GDGS). Residue Asp103 participates in Mg(2+) binding. 125–127 (TID) contributes to the substrate binding site. The Proton acceptor role is filled by Asp127. An ADP-binding site is contributed by Arg154. Substrate is bound by residues Arg162 and 169–171 (MGR). ADP is bound by residues 185-187 (GAE), Arg211, and 213-215 (KKH). Residues Glu222, Arg243, and 249–252 (HVQR) each bind substrate.

It belongs to the phosphofructokinase type A (PFKA) family. ATP-dependent PFK group I subfamily. Prokaryotic clade 'B1' sub-subfamily. In terms of assembly, homotetramer. Requires Mg(2+) as cofactor.

The protein localises to the cytoplasm. The enzyme catalyses beta-D-fructose 6-phosphate + ATP = beta-D-fructose 1,6-bisphosphate + ADP + H(+). Its pathway is carbohydrate degradation; glycolysis; D-glyceraldehyde 3-phosphate and glycerone phosphate from D-glucose: step 3/4. Its activity is regulated as follows. Allosterically activated by ADP and other diphosphonucleosides, and allosterically inhibited by phosphoenolpyruvate. Its function is as follows. Catalyzes the phosphorylation of D-fructose 6-phosphate to fructose 1,6-bisphosphate by ATP, the first committing step of glycolysis. This is ATP-dependent 6-phosphofructokinase from Anoxybacillus flavithermus (strain DSM 21510 / WK1).